Here is a 133-residue protein sequence, read N- to C-terminus: Small ribosomal subunit protein uS8 (133 aa).

The interval 1–28 (MANHDPISDMLTRIRNASEKRHEKTKVP) is disordered. Over residues 16-26 (NASEKRHEKTK) the composition is skewed to basic and acidic residues.

Belongs to the universal ribosomal protein uS8 family. As to quaternary structure, part of the 30S ribosomal subunit. Contacts proteins S5 and S12.

Functionally, one of the primary rRNA binding proteins, it binds directly to 16S rRNA central domain where it helps coordinate assembly of the platform of the 30S subunit. The protein is Small ribosomal subunit protein uS8 of Prochlorococcus marinus (strain NATL2A).